Here is a 70-residue protein sequence, read N- to C-terminus: Putative membrane protein insertion efficiency factor (70 aa).

Belongs to the UPF0161 family.

It is found in the cell inner membrane. Functionally, could be involved in insertion of integral membrane proteins into the membrane. This chain is Putative membrane protein insertion efficiency factor, found in Methylobacillus flagellatus (strain ATCC 51484 / DSM 6875 / VKM B-1610 / KT).